Here is a 291-residue protein sequence, read N- to C-terminus: Phosphatidylglycerol--prolipoprotein diacylglyceryl transferase (291 aa).

Helical transmembrane passes span 21 to 41 (VALHWYGLMYLVGFVFAMWLA), 60 to 80 (LLYAGFLGVFLGGRIGYVLFY), 96 to 116 (WDGGMSFHGGLIGVILVMIIF), 130 to 150 (FIAPLIPFGLGAGRLGNFING), 198 to 218 (SQLYELALEGVVLFIILNLFI), 225 to 245 (GAVSGLFLIGYGALRIIVEFF), and 260 to 280 (ISMGQILSIPMIIAGAIMMVW). Arg143 contacts a 1,2-diacyl-sn-glycero-3-phospho-(1'-sn-glycerol).

The protein belongs to the Lgt family.

It localises to the cell inner membrane. The enzyme catalyses L-cysteinyl-[prolipoprotein] + a 1,2-diacyl-sn-glycero-3-phospho-(1'-sn-glycerol) = an S-1,2-diacyl-sn-glyceryl-L-cysteinyl-[prolipoprotein] + sn-glycerol 1-phosphate + H(+). It functions in the pathway protein modification; lipoprotein biosynthesis (diacylglyceryl transfer). Its function is as follows. Catalyzes the transfer of the diacylglyceryl group from phosphatidylglycerol to the sulfhydryl group of the N-terminal cysteine of a prolipoprotein, the first step in the formation of mature lipoproteins. This is Phosphatidylglycerol--prolipoprotein diacylglyceryl transferase from Salmonella choleraesuis (strain SC-B67).